The sequence spans 914 residues: MAIEEKQSRFRISDIAKELQVSPREVLQFVKQAGGKVASTSSMVGEDMRDMIFGNFSQEKKRVDEARKIRAEKQKRLTRLEEQSRKAYEKEQQLKESLSIAPLPAPVLHAPEVKIEIPPETATTPVAAEPPAILPVVSTPQPEPVADLPLVTEPVVAEPVAEAEPVVEAPVAETAGPEVMTPLVQTLPESMQAYEAPQKIGGLTVLGTIDVISEAERKKKSRKKSFRESAVELKGEFENVLSVDSEDGEAAKKKAAKPDGGEDVGVKKKKGKKKKKVEIDDKVISKNIKSTISGMDDSGLSGSRQKFRKQRRMEREREFEEAEAMREAEKTLIRVTEYASPHELAELMGLTAKEIIQKCFSMGKFVTINQRLDKETIELIGLEFGFEVEFISEIEATTTEELVDNAEDLQTRPPVVTIMGHVDHGKTSLLDYIRRSNVVAGESGGITQHIGAYEVSLDDGRHITFLDTPGHEAFTAMRARGAQVTDIVILVVAADDSVMPQTIEAINHAKAAGVPIVVAINKIDKPEANVEKIKAQLSEAGVLVEDWGGESQCQEISAKKGIGISELLEKVLAEAEIRELKGNYSRDILASGVIVESELDKGKGVVSTVLVQRGFLKVGDPFVAGNSMGKVRALMDERGKRIHEAGPSTPVRVLGFEDMPQSGDVLTVMASDRDARDLAQKRQIIKREHEFRRSTRVKLDSIARQIKEGLKKELSVIIKADTDGSIQALADGLMKIHNEEVKVQIIHQGVGQITETDVLLAAASDAIIIGFRVRPNVNAKRLAEKEDLDVRFYSVIYHVLEDVEKALEGMLSPELHEESLGSLEIRQVFRVPKVGNVGGAYVLEGKVSRDAKVRLLRDGVQIFEGQLDSLKRFKDDVKEVDAGYECGVSLKGYDDIKVGDVIEAYKIVEKKRKL.

2 disordered regions span residues 246–271 (EDGE…KKKG) and 293–313 (SGMD…QRRM). A compositionally biased stretch (basic and acidic residues) spans 249-266 (EAAKKKAAKPDGGEDVGV). The tr-type G domain occupies 411–581 (TRPPVVTIMG…LAEAEIRELK (171 aa)). The G1 stretch occupies residues 420–427 (GHVDHGKT). 420–427 (GHVDHGKT) contacts GTP. Residues 445–449 (GITQH) form a G2 region. Residues 467–470 (DTPG) form a G3 region. Residues 467–471 (DTPGH) and 521–524 (NKID) each bind GTP. The tract at residues 521 to 524 (NKID) is G4. The segment at 557-559 (SAK) is G5.

This sequence belongs to the TRAFAC class translation factor GTPase superfamily. Classic translation factor GTPase family. IF-2 subfamily.

It localises to the cytoplasm. One of the essential components for the initiation of protein synthesis. Protects formylmethionyl-tRNA from spontaneous hydrolysis and promotes its binding to the 30S ribosomal subunits. Also involved in the hydrolysis of GTP during the formation of the 70S ribosomal complex. The sequence is that of Translation initiation factor IF-2 from Chlorobaculum tepidum (strain ATCC 49652 / DSM 12025 / NBRC 103806 / TLS) (Chlorobium tepidum).